The chain runs to 584 residues: Glutathione hydrolase proenzyme (584 aa).

The first 25 residues, 1–25 (MAPAAMNLLCTVLYLLSSFAQVSDA), serve as a signal peptide directing secretion. An N-linked (GlcNAc...) asparagine glycan is attached at Asn111. Arg120 contributes to the L-glutamate binding site. N-linked (GlcNAc...) asparagine glycosylation is found at Asn135, Asn262, Asn272, Asn350, and Asn370. Thr395 serves as the catalytic Nucleophile. L-glutamate contacts are provided by residues Thr413, Glu434, and 465 to 466 (SS). A glycan (N-linked (GlcNAc...) asparagine) is linked at Asn547.

This sequence belongs to the gamma-glutamyltransferase family. In terms of assembly, heterodimer composed of the light and heavy chains. The active site is located in the light chain. In terms of processing, cleaved by autocatalysis into a large and a small subunit and the autocatalytic cleavage is essential to the functional activation of the enzyme.

It is found in the secreted. The enzyme catalyses an N-terminal (5-L-glutamyl)-[peptide] + an alpha-amino acid = 5-L-glutamyl amino acid + an N-terminal L-alpha-aminoacyl-[peptide]. It carries out the reaction glutathione + H2O = L-cysteinylglycine + L-glutamate. The catalysed reaction is an S-substituted glutathione + H2O = an S-substituted L-cysteinylglycine + L-glutamate. It catalyses the reaction leukotriene C4 + H2O = leukotriene D4 + L-glutamate. The protein operates within sulfur metabolism; glutathione metabolism. Functionally, cleaves the gamma-glutamyl bond of extracellular glutathione (gamma-Glu-Cys-Gly), glutathione conjugates, and other gamma-glutamyl compounds. The metabolism of glutathione releases free glutamate and the dipeptide cysteinyl-glycine, which is hydrolyzed to cysteine and glycine by dipeptidases. In the presence of high concentrations of dipeptides and some amino acids, can also catalyze a transpeptidation reaction, transferring the gamma-glutamyl moiety to an acceptor amino acid to form a new gamma-glutamyl compound. Initiates extracellular glutathione (GSH) breakdown, provides cells with a local cysteine supply and contributes to maintain intracellular GSH level. It is part of the cell antioxidant defense mechanism. In Arthroderma benhamiae (strain ATCC MYA-4681 / CBS 112371) (Trichophyton mentagrophytes), this protein is Glutathione hydrolase proenzyme.